Consider the following 81-residue polypeptide: Cytotoxin 8 (81 aa).

The N-terminal stretch at 1–21 is a signal peptide; sequence MKTLLLTLVVVTIVCLDLGYT. Intrachain disulfides connect C24–C42, C35–C59, C63–C74, and C75–C80.

It belongs to the three-finger toxin family. Short-chain subfamily. Type IA cytotoxin sub-subfamily. Monomer in solution; Homodimer and oligomer in the presence of negatively charged lipids forming a pore with a size ranging between 20 and 30 Angstroms. In terms of tissue distribution, expressed by the venom gland.

It is found in the secreted. The protein resides in the target cell membrane. Its function is as follows. Shows cytolytic activity on many different cells by forming pore in lipid membranes. In vivo, increases heart rate or kills the animal by cardiac arrest. In addition, it binds to heparin with high affinity, interacts with Kv channel-interacting protein 1 (KCNIP1) in a calcium-independent manner, and binds to integrin alpha-V/beta-3 (ITGAV/ITGB3) with moderate affinity. In Naja atra (Chinese cobra), this protein is Cytotoxin 8.